Consider the following 513-residue polypeptide: ATP synthase subunit alpha (513 aa).

169 to 176 (GDRQTGKT) provides a ligand contact to ATP.

This sequence belongs to the ATPase alpha/beta chains family. As to quaternary structure, F-type ATPases have 2 components, CF(1) - the catalytic core - and CF(0) - the membrane proton channel. CF(1) has five subunits: alpha(3), beta(3), gamma(1), delta(1), epsilon(1). CF(0) has three main subunits: a(1), b(2) and c(9-12). The alpha and beta chains form an alternating ring which encloses part of the gamma chain. CF(1) is attached to CF(0) by a central stalk formed by the gamma and epsilon chains, while a peripheral stalk is formed by the delta and b chains.

Its subcellular location is the cell inner membrane. It catalyses the reaction ATP + H2O + 4 H(+)(in) = ADP + phosphate + 5 H(+)(out). In terms of biological role, produces ATP from ADP in the presence of a proton gradient across the membrane. The alpha chain is a regulatory subunit. The sequence is that of ATP synthase subunit alpha from Shigella boydii serotype 18 (strain CDC 3083-94 / BS512).